Reading from the N-terminus, the 426-residue chain is MLDPALLRHQPADLAERLRTSRGFELDVSALESLEADRKRIQVRTQELQSLRNSRSKAIGQAKAKGEDVSAIMAEVAAFADELKASEVALDELREKIDAISMGIPNLPADDVPAGADENDNVEQARWGTARQFDFKVLDHVELGARNGWLDGETAAKLSGSRFTVLRGPIARLHRALAQFMVDLHTGEHGYEETNVPLLVNADSLRGTSQLPKFEDDLFKTAVGDSTRYLIPTSEVPLTNIVRDEIVDAERLPLRMTAHSMCFRAEAGSGGRDVRGMIRQHQFEKVELVSISRPEDSDAEHQRMTRCAEVVLEKLGLPYRKVLLCTGDMGFSAVKTYDLEVWLPSQETYREISSCSNCGDFQARRMQARWRNPATGKPELAHTLNGSGVAVGRAMIAVMENYQNADGSITVPEALRPYMGGLETIG.

An L-serine-binding site is contributed by 233 to 235 (TSE). Residue 264-266 (RAE) coordinates ATP. Glu287 lines the L-serine pocket. Residue 351–354 (EISS) participates in ATP binding. L-serine is bound at residue Ser387.

It belongs to the class-II aminoacyl-tRNA synthetase family. Type-1 seryl-tRNA synthetase subfamily. Homodimer. The tRNA molecule binds across the dimer.

It localises to the cytoplasm. The enzyme catalyses tRNA(Ser) + L-serine + ATP = L-seryl-tRNA(Ser) + AMP + diphosphate + H(+). It carries out the reaction tRNA(Sec) + L-serine + ATP = L-seryl-tRNA(Sec) + AMP + diphosphate + H(+). It functions in the pathway aminoacyl-tRNA biosynthesis; selenocysteinyl-tRNA(Sec) biosynthesis; L-seryl-tRNA(Sec) from L-serine and tRNA(Sec): step 1/1. Catalyzes the attachment of serine to tRNA(Ser). Is also able to aminoacylate tRNA(Sec) with serine, to form the misacylated tRNA L-seryl-tRNA(Sec), which will be further converted into selenocysteinyl-tRNA(Sec). This Stenotrophomonas maltophilia (strain R551-3) protein is Serine--tRNA ligase.